The sequence spans 296 residues: Bifunctional protein FolD (296 aa).

Residues 166–168 (GRS), Ser-191, and Ile-232 contribute to the NADP(+) site.

The protein belongs to the tetrahydrofolate dehydrogenase/cyclohydrolase family. As to quaternary structure, homodimer.

The catalysed reaction is (6R)-5,10-methylene-5,6,7,8-tetrahydrofolate + NADP(+) = (6R)-5,10-methenyltetrahydrofolate + NADPH. It carries out the reaction (6R)-5,10-methenyltetrahydrofolate + H2O = (6R)-10-formyltetrahydrofolate + H(+). It participates in one-carbon metabolism; tetrahydrofolate interconversion. Its function is as follows. Catalyzes the oxidation of 5,10-methylenetetrahydrofolate to 5,10-methenyltetrahydrofolate and then the hydrolysis of 5,10-methenyltetrahydrofolate to 10-formyltetrahydrofolate. The polypeptide is Bifunctional protein FolD (Cereibacter sphaeroides (strain ATCC 17023 / DSM 158 / JCM 6121 / CCUG 31486 / LMG 2827 / NBRC 12203 / NCIMB 8253 / ATH 2.4.1.) (Rhodobacter sphaeroides)).